A 79-amino-acid chain; its full sequence is Sulfur carrier protein TusA (79 aa).

C17 acts as the Cysteine persulfide intermediate in catalysis.

This sequence belongs to the sulfur carrier protein TusA family.

Its subcellular location is the cytoplasm. Its function is as follows. Sulfur carrier protein which probably makes part of a sulfur-relay system. The polypeptide is Sulfur carrier protein TusA (Histophilus somni (strain 129Pt) (Haemophilus somnus)).